The following is a 165-amino-acid chain: Xanthine-guanine phosphoribosyltransferase (165 aa).

5-phospho-alpha-D-ribose 1-diphosphate-binding positions include arginine 41–glycine 42 and aspartate 98–threonine 106. A Mg(2+)-binding site is contributed by aspartate 99. Guanine contacts are provided by aspartate 102 and isoleucine 145. Xanthine-binding residues include aspartate 102 and isoleucine 145. Residues aspartate 102–threonine 106 and tryptophan 144–isoleucine 145 each bind GMP.

The protein belongs to the purine/pyrimidine phosphoribosyltransferase family. XGPT subfamily. As to quaternary structure, homotetramer. Requires Mg(2+) as cofactor.

The protein resides in the cell inner membrane. It carries out the reaction GMP + diphosphate = guanine + 5-phospho-alpha-D-ribose 1-diphosphate. The catalysed reaction is XMP + diphosphate = xanthine + 5-phospho-alpha-D-ribose 1-diphosphate. It catalyses the reaction IMP + diphosphate = hypoxanthine + 5-phospho-alpha-D-ribose 1-diphosphate. It functions in the pathway purine metabolism; GMP biosynthesis via salvage pathway; GMP from guanine: step 1/1. It participates in purine metabolism; XMP biosynthesis via salvage pathway; XMP from xanthine: step 1/1. Purine salvage pathway enzyme that catalyzes the transfer of the ribosyl-5-phosphate group from 5-phospho-alpha-D-ribose 1-diphosphate (PRPP) to the N9 position of the 6-oxopurines guanine and xanthine to form the corresponding ribonucleotides GMP (guanosine 5'-monophosphate) and XMP (xanthosine 5'-monophosphate), with the release of PPi. To a lesser extent, also acts on hypoxanthine. The chain is Xanthine-guanine phosphoribosyltransferase from Sinorhizobium medicae (strain WSM419) (Ensifer medicae).